The sequence spans 173 residues: Superoxide dismutase [Cu-Zn] (173 aa).

A signal peptide spans 1–19; the sequence is MKRFSLAILALVVATGAQA. The Cu cation site is built by histidine 67, histidine 69, and histidine 92. Residues 72–113 form a disordered region; the sequence is GSCQPATKDGKASAAESAGGHLDPQNTGKHEGPEGAGHLGDL. Cysteine 74 and cysteine 169 form a disulfide bridge. Zn(2+) contacts are provided by histidine 92, histidine 101, histidine 109, and aspartate 112. Position 147 (histidine 147) interacts with Cu cation.

It belongs to the Cu-Zn superoxide dismutase family. In terms of assembly, monomer. It depends on Cu cation as a cofactor. Zn(2+) is required as a cofactor.

It is found in the periplasm. It catalyses the reaction 2 superoxide + 2 H(+) = H2O2 + O2. Destroys radicals which are normally produced within the cells and which are toxic to biological systems. This is Superoxide dismutase [Cu-Zn] (sodC) from Escherichia coli O157:H7.